Reading from the N-terminus, the 335-residue chain is Glycerol-3-phosphate dehydrogenase [NAD(P)+] (335 aa).

NADPH is bound by residues serine 10, phenylalanine 11, arginine 31, and lysine 105. Sn-glycerol 3-phosphate contacts are provided by lysine 105, glycine 136, and serine 138. Position 140 (alanine 140) interacts with NADPH. Sn-glycerol 3-phosphate is bound by residues lysine 191, aspartate 244, serine 254, arginine 255, and asparagine 256. The Proton acceptor role is filled by lysine 191. Arginine 255 contributes to the NADPH binding site. NADPH contacts are provided by valine 279 and glutamate 281.

The protein belongs to the NAD-dependent glycerol-3-phosphate dehydrogenase family.

The protein localises to the cytoplasm. It catalyses the reaction sn-glycerol 3-phosphate + NAD(+) = dihydroxyacetone phosphate + NADH + H(+). The catalysed reaction is sn-glycerol 3-phosphate + NADP(+) = dihydroxyacetone phosphate + NADPH + H(+). The protein operates within membrane lipid metabolism; glycerophospholipid metabolism. Functionally, catalyzes the reduction of the glycolytic intermediate dihydroxyacetone phosphate (DHAP) to sn-glycerol 3-phosphate (G3P), the key precursor for phospholipid synthesis. The sequence is that of Glycerol-3-phosphate dehydrogenase [NAD(P)+] from Leptospira interrogans serogroup Icterohaemorrhagiae serovar Lai (strain 56601).